Consider the following 323-residue polypeptide: Cytochrome c biogenesis protein CcsA (323 aa).

A run of 8 helical transmembrane segments spans residues 9–29 (ILTH…LITL), 37–57 (LYVS…GLLV), 71–91 (LYES…FTYF), 100–120 (VSAI…SGFL), 145–165 (MVLG…LIVI), 227–247 (IISL…VWAN), 261–275 (TWAF…IYLH), and 288–308 (AIVA…VNLL).

It belongs to the CcmF/CycK/Ccl1/NrfE/CcsA family. May interact with Ccs1.

The protein resides in the plastid. Its subcellular location is the chloroplast thylakoid membrane. Functionally, required during biogenesis of c-type cytochromes (cytochrome c6 and cytochrome f) at the step of heme attachment. The protein is Cytochrome c biogenesis protein CcsA of Cucumis sativus (Cucumber).